A 230-amino-acid polypeptide reads, in one-letter code: 2,3-bisphosphoglycerate-dependent phosphoglycerate mutase (230 aa).

Residues 8–15 (RHGESEWN), 21–22 (TG), arginine 60, 87–90 (ERHY), lysine 98, 114–115 (RR), and 183–184 (GN) each bind substrate. The active-site Tele-phosphohistidine intermediate is histidine 9. Glutamate 87 acts as the Proton donor/acceptor in catalysis.

Belongs to the phosphoglycerate mutase family. BPG-dependent PGAM subfamily.

The enzyme catalyses (2R)-2-phosphoglycerate = (2R)-3-phosphoglycerate. It functions in the pathway carbohydrate degradation; glycolysis; pyruvate from D-glyceraldehyde 3-phosphate: step 3/5. In terms of biological role, catalyzes the interconversion of 2-phosphoglycerate and 3-phosphoglycerate. This Streptococcus gordonii (strain Challis / ATCC 35105 / BCRC 15272 / CH1 / DL1 / V288) protein is 2,3-bisphosphoglycerate-dependent phosphoglycerate mutase.